Here is a 147-residue protein sequence, read N- to C-terminus: HTH-type transcriptional regulator MntR (147 aa).

The 63-residue stretch at 1-63 (MPTPSMEDYI…YEKYRGFVLT (63 aa)) folds into the HTH dtxR-type domain. Mn(2+) is bound by residues aspartate 8, glutamate 11, histidine 77, glutamate 99, glutamate 102, and histidine 103.

Belongs to the DtxR/MntR family. As to quaternary structure, homodimer.

It localises to the cytoplasm. DNA binding is strongly activated by Mn(2+). In terms of biological role, central regulator of manganese homeostasis. The polypeptide is HTH-type transcriptional regulator MntR (Oceanobacillus iheyensis (strain DSM 14371 / CIP 107618 / JCM 11309 / KCTC 3954 / HTE831)).